The primary structure comprises 6298 residues: Adhesion G-protein coupled receptor V1 (6298 aa).

An N-terminal signal peptide occupies residues 1-28 (MSVTSEPGMISSFLLVYLSTLFISFVFG). 22 consecutive Calx-beta domains span residues 29–116 (EAEI…FHLT), 132–236 (ASVT…IQLR), 251–362 (VEII…IMLL), 389–489 (YGVL…LTIL), 646–746 (PAIA…TLSL), 764–862 (DLII…VILS), 877–980 (VNIT…IILL), 994–1094 (ASLR…IVLF), 1108–1208 (ATVI…LRLV), 1440–1540 (AMPR…FLLK), 1562–1662 (QKSD…VTLV), 1706–1805 (TGLP…VELL), 1846–1948 (ILVT…VSIL), 1962–2075 (TLTI…IELF), 2103–2202 (HLVI…VQLL), 2218–2320 (VITI…VQLA), 2437–2537 (TLCL…FLIS), 2576–2672 (FIIY…VRLG), 2687–2786 (VTVN…VVLY), 2810–2921 (LTVE…VNLT), 2945–3044 (QIVI…LLLT), and 3067–3167 (DGPG…VCTL). At 29–5901 (EAEIRFTGQT…TDNSSSYNEA (5873 aa)) the chain is on the extracellular side. 6 EAR repeats span residues 3251–3292 (VFSI…RWQG), 3293–3341 (TFVP…MLTA), 3344–3389 (RLVL…RWNG), 3391–3435 (NFAW…TWSG), 3437–3484 (QFIN…VWEM), and 3488–3530 (SLRY…CWNS). Calx-beta domains follow at residues 3581 to 3622 (QSDF…RVQL), 3636 to 3736 (SVRV…VVTL), 3772 to 3872 (GAVR…VTIA), 3919 to 4003 (GGVI…ISLV), 4017 to 4120 (VNVV…IELT), 4135 to 4235 (SVII…EFQL), 4251 to 4351 (ARIT…LAIT), 4384 to 4484 (RIII…ILLI), 4507 to 4607 (SPFG…IVQL), 4628 to 4728 (KFGD…AVQL), 4989 to 5089 (TTAE…INLT), 5281 to 5325 (AVEE…YVFL), and 5361 to 5461 (IGFS…FVEL). The GAIN-B domain maps to 5740-5896 (SILALHWNPQ…AVYAQTDNSS (157 aa)). Intrachain disulfides connect Cys5849/Cys5878 and Cys5866/Cys5880. Residues 5849 to 5896 (CLLWNQAAASWLSDSQFCKVVEDASDYVECACSHMSVYAVYAQTDNSS) form a GPS region. Residues 5902–5922 (FFSAGLICISGLCLAVVSHMF) form a helical membrane-spanning segment. The Cytoplasmic segment spans residues 5923 to 5932 (CARHSMFAAK). The helical transmembrane segment at 5933 to 5953 (LLTHMMVASLGTQILFLASAY) threads the bilayer. Over 5954–5973 (ASPHLSEESCSAVAAVAHYL) the chain is Extracellular. A helical transmembrane segment spans residues 5974-5994 (YLCQFSWMLIQSVNFWYVLVV). At 5995–6003 (SDEHTERRC) the chain is on the cytoplasmic side. Residues 6004 to 6024 (LLFCLLSWGLPSFVVILLILI) form a helical membrane-spanning segment. Over 6025-6052 (LRGIYHRSMPQIYGLIHGDLCFIPNIYA) the chain is Extracellular. A helical transmembrane segment spans residues 6053–6073 (ALFTAALVPLMCLVVVFVVFI). Topologically, residues 6074–6097 (HAYQLKPQWKGYDDVFRGRTNAAE) are cytoplasmic. Residues 6098–6118 (IPLILYLFALISMTWLWGGLH) traverse the membrane as a helical segment. Residues 6119–6126 (MAYGHFWM) lie on the Extracellular side of the membrane. Residues 6127–6147 (LVLFVIFNSLQGLYVFVVYFI) traverse the membrane as a helical segment. The Cytoplasmic portion of the chain corresponds to 6148–6298 (LHNQTCCPMK…RRIPIADTHL (151 aa)). 2 disordered regions span residues 6206-6242 (ERSS…GSLI) and 6264-6283 (SVSD…LTDS). 2 stretches are compositionally biased toward polar residues: residues 6208-6226 (SSFQ…SPQN) and 6265-6283 (VSDN…LTDS).

Belongs to the G-protein coupled receptor 2 family. Adhesion G-protein coupled receptor (ADGR) subfamily. Forms a heterodimer, consisting of a large extracellular region (alpha subunit) non-covalently linked to a seven-transmembrane moiety (beta subunit). Interacts (via the cytoplasmic region) with PDZD7. Component of USH2 complex, composed of ADGRV1, PDZD7, USH2A and WHRN. Interacts with USH2A and WHRN. Interacts (via the cytoplasmic region) with MYO7A (via MyTH4-FERM domains). Post-translationally, autoproteolytically cleaved into 2 subunits, an extracellular alpha subunit and a seven-transmembrane subunit. In terms of tissue distribution, expressed by oligodendrocytes. In midbrain, enriched in the myelinated regions of the superior and inferior colliculi. In the cochlea, expressed in developing hair cells. Expressed by photoreceptors in the retina.

The protein localises to the cell membrane. It localises to the cell projection. The protein resides in the stereocilium membrane. It is found in the photoreceptor inner segment. Its subcellular location is the secreted. G-protein coupled receptor which has an essential role in the development of hearing and vision. Couples to G-alpha(i)-proteins, GNAI1/2/3, G-alpha(q)-proteins, GNAQ, as well as G-alpha(s)-proteins, GNAS, inhibiting adenylate cyclase (AC) activity and cAMP production. Required for the hair bundle ankle formation, which connects growing stereocilia in developing cochlear hair cells of the inner ear. In response to extracellular calcium, activates kinases PKA and PKC to regulate myelination by inhibiting the ubiquitination of MAG, thus enhancing the stability of this protein in myelin-forming cells of the auditory pathway. In retina photoreceptors, the USH2 complex is required for the maintenance of periciliary membrane complex that seems to play a role in regulating intracellular protein transport. Involved in the regulation of bone metabolism. Functionally, cleaved ADGRV1 beta-subunit couples with G-alpha(i)-proteins, GNAI1/2/3, and constitutively inhibits adenylate cyclase (AC) activity with a stronger effect than full ADGRV1. This Mus musculus (Mouse) protein is Adhesion G-protein coupled receptor V1.